Reading from the N-terminus, the 819-residue chain is FYN-binding protein 1 (819 aa).

Positions 1–45 are enriched in polar residues; that stretch reads MAKFNTGSNPTEEAATSSRPFKVAGQSSPSGIQSRKNLFDNQGNA. A disordered region spans residues 1-490; it reads MAKFNTGSNP…REKKEQELKK (490 aa). Lysine 3 carries the N6-acetyllysine modification. Phosphoserine is present on residues serine 28 and serine 46. A compositionally biased stretch (basic and acidic residues) spans 69 to 79; sequence TYEEKPEKEPK. Residues 150 to 160 are compositionally biased toward pro residues; sequence GPKPGPAPPVP. Phosphoserine is present on serine 222. 2 stretches are compositionally biased toward basic and acidic residues: residues 237 to 248 and 273 to 285; these read PPKEDPEDKDHG and NFEE…KTDL. At serine 318 the chain carries Phosphoserine. 2 stretches are compositionally biased toward pro residues: residues 342-351 and 380-412; these read GPPPPKPNRP and LPPP…PRNI. The segment covering 439 to 453 has biased composition (acidic residues); sequence LEEEQESEGETYEDI. Serine 445 is modified (phosphoserine). Residues 448–495 adopt a coiled-coil conformation; that stretch reads ETYEDIDSSKERDKKREKEEKKRLELERKEQKEREKKEQELKKKFKLT. A compositionally biased stretch (basic and acidic residues) spans 454–489; that stretch reads DSSKERDKKREKEEKKRLELERKEQKEREKKEQELK. The Nuclear localization signal motif lies at 479-493; the sequence is KEREKKEQELKKKFK. An SH3 1 domain is found at 499–560; sequence QVIHHAKACC…KTTAVEIDYD (62 aa). The residue at position 559 (tyrosine 559) is a Phosphotyrosine. Phosphoserine occurs at positions 561 and 568. Residues 584-587 carry the SH2-binding; to LCP2 motif; sequence YDDV. Disordered regions lie at residues 589–635 and 649–728; these read EQDA…DEKT and KDDR…EKEE. Over residues 610-626 the composition is skewed to acidic residues; it reads TDDEIYDGIEEEDDDDG. Residues 615–618 carry the SH2-binding; to FYN motif; the sequence is YDGI. A compositionally biased stretch (basic and acidic residues) spans 649–664; it reads KDDRKKSIREKPKVSE. A compositionally biased stretch (polar residues) spans 668-677; the sequence is NEGSSLPSQH. The span at 682 to 692 shows a compositional bias: acidic residues; sequence VGEEVYDDVDA. Phosphotyrosine is present on tyrosine 687. The Nuclear localization signal signature appears at 710 to 736; it reads RAKTEEKDPKKLKKQEKEEKDLRKKFK. Basic and acidic residues predominate over residues 711 to 728; it reads AKTEEKDPKKLKKQEKEE. One can recognise an SH3 2 domain in the interval 736-804; sequence KYDGEIRVLY…LRSYLVDNDG (69 aa).

Part of a complex consisting of SKAP2, FYB1 and PTPNS1. Part of a complex consisting of SKAP2, FYB1 and PIRB. Part of a complex consisting of SKAP1, FYB1 and CLNK. Interacts with CLNK (via its SH2 domain); this interaction allows SKAP1 and FYB1 to recruit FYN to the complex, thus promoting the phosphorylation of CLNK by FYN. Interacts with FYN. Interacts with LCP2. Interacts with SKAP1. Interacts with SKAP2. Interacts with FASLG. Interacts with EVL. Interacts with TMEM47. Interacts with LCK. In terms of processing, T-cell receptor ligation leads to increased tyrosine phosphorylation. In terms of tissue distribution, expressed in hematopoietic tissues such as myeloid and T-cells, spleen and thymus. Not expressed in B-cells, nor in non-lymphoid tissues. FYB-130 is preferentially expressed in mature T-cells compared to FYB-120, whereas thymocytes showed a greater relative amount of FYB-120. Expressed in podocytes.

It is found in the cytoplasm. The protein localises to the nucleus. It localises to the cell junction. Functionally, acts as an adapter protein of the FYN and LCP2 signaling cascades in T-cells. May play a role in linking T-cell signaling to remodeling of the actin cytoskeleton. Modulates the expression of IL2. Involved in platelet activation. Prevents the degradation of SKAP1 and SKAP2. May be involved in high affinity immunoglobulin epsilon receptor signaling in mast cells. This chain is FYN-binding protein 1 (Fyb1), found in Mus musculus (Mouse).